Here is a 629-residue protein sequence, read N- to C-terminus: tRNA uridine 5-carboxymethylaminomethyl modification enzyme MnmG (629 aa).

FAD is bound at residue 13 to 18 (GGGHAG). Position 273–287 (273–287 (GPRYCPSIEDKITRF)) interacts with NAD(+).

This sequence belongs to the MnmG family. In terms of assembly, homodimer. Heterotetramer of two MnmE and two MnmG subunits. FAD is required as a cofactor.

The protein localises to the cytoplasm. In terms of biological role, NAD-binding protein involved in the addition of a carboxymethylaminomethyl (cmnm) group at the wobble position (U34) of certain tRNAs, forming tRNA-cmnm(5)s(2)U34. The polypeptide is tRNA uridine 5-carboxymethylaminomethyl modification enzyme MnmG (Colwellia psychrerythraea (strain 34H / ATCC BAA-681) (Vibrio psychroerythus)).